The primary structure comprises 145 residues: 3-hydroxyacyl-[acyl-carrier-protein] dehydratase FabZ (145 aa).

H49 is a catalytic residue.

Belongs to the thioester dehydratase family. FabZ subfamily.

The protein localises to the cytoplasm. The catalysed reaction is a (3R)-hydroxyacyl-[ACP] = a (2E)-enoyl-[ACP] + H2O. Functionally, involved in unsaturated fatty acids biosynthesis. Catalyzes the dehydration of short chain beta-hydroxyacyl-ACPs and long chain saturated and unsaturated beta-hydroxyacyl-ACPs. In Rickettsia akari (strain Hartford), this protein is 3-hydroxyacyl-[acyl-carrier-protein] dehydratase FabZ.